A 557-amino-acid polypeptide reads, in one-letter code: Alpha-glucosidase (557 aa).

Aspartate 201 serves as the catalytic Nucleophile. Residue glutamate 256 is the Proton donor of the active site.

Belongs to the glycosyl hydrolase 13 family.

It carries out the reaction Hydrolysis of terminal, non-reducing (1-&gt;4)-linked alpha-D-glucose residues with release of alpha-D-glucose.. The chain is Alpha-glucosidase (agl) from Pediococcus pentosaceus.